Here is an 85-residue protein sequence, read N- to C-terminus: U4-theraphotoxin-Hhn1a (85 aa).

Positions 1–22 are cleaved as a signal peptide; that stretch reads MKMTLIAILTCAAVLVLHITAA. A propeptide spanning residues 23–48 is cleaved from the precursor; that stretch reads EELEAESQLMEVGMPDTELEAVDEER. Cystine bridges form between Cys-52-Cys-66, Cys-56-Cys-77, and Cys-71-Cys-82.

The protein belongs to the neurotoxin 12 (Hwtx-2) family. 02 (Hwtx-2) subfamily. As to quaternary structure, monomer. Expressed by the venom gland.

It is found in the secreted. In terms of biological role, neurotoxin active on both insects and mammals. This Cyriopagopus hainanus (Chinese bird spider) protein is U4-theraphotoxin-Hhn1a.